The sequence spans 307 residues: Myeloid-associated differentiation marker-like protein 2 (307 aa).

2 MARVEL domains span residues 17-154 (AVTS…ARPG) and 159-303 (YMAT…RIRF). The next 7 membrane-spanning stretches (helical) occupy residues 53–73 (FCMA…ACEF), 90–110 (AFAM…PLYF), 129–149 (LAAS…VALT), 163–183 (VSGL…GALV), 198–218 (VAVY…SVMG), 232–252 (IVYT…WPVF), and 278–298 (LVVA…LAYS).

The protein belongs to the MAL family.

The protein resides in the membrane. The polypeptide is Myeloid-associated differentiation marker-like protein 2 (Myadml2) (Mus musculus (Mouse)).